A 139-amino-acid chain; its full sequence is Large-conductance mechanosensitive channel (139 aa).

The next 3 membrane-spanning stretches (helical) occupy residues valine 16–leucine 36, isoleucine 40–valine 60, and glycine 79–valine 99.

It belongs to the MscL family. Homopentamer.

Its subcellular location is the cell inner membrane. In terms of biological role, channel that opens in response to stretch forces in the membrane lipid bilayer. May participate in the regulation of osmotic pressure changes within the cell. The sequence is that of Large-conductance mechanosensitive channel from Phenylobacterium zucineum (strain HLK1).